Consider the following 258-residue polypeptide: Ribosomal RNA small subunit methyltransferase A (258 aa).

Residues His-13, Leu-15, Gly-40, Glu-61, Asp-86, and Asn-106 each contribute to the S-adenosyl-L-methionine site.

Belongs to the class I-like SAM-binding methyltransferase superfamily. rRNA adenine N(6)-methyltransferase family. RsmA subfamily.

The protein resides in the cytoplasm. It catalyses the reaction adenosine(1518)/adenosine(1519) in 16S rRNA + 4 S-adenosyl-L-methionine = N(6)-dimethyladenosine(1518)/N(6)-dimethyladenosine(1519) in 16S rRNA + 4 S-adenosyl-L-homocysteine + 4 H(+). Specifically dimethylates two adjacent adenosines (A1518 and A1519) in the loop of a conserved hairpin near the 3'-end of 16S rRNA in the 30S particle. May play a critical role in biogenesis of 30S subunits. This Coxiella burnetii (strain RSA 331 / Henzerling II) protein is Ribosomal RNA small subunit methyltransferase A.